The primary structure comprises 132 residues: Small ribosomal subunit protein eS12 (132 aa).

The protein belongs to the eukaryotic ribosomal protein eS12 family.

It localises to the cytoplasm. In Xenopus laevis (African clawed frog), this protein is Small ribosomal subunit protein eS12 (rps12).